A 545-amino-acid chain; its full sequence is Probable bifunctional tRNA threonylcarbamoyladenosine biosynthesis protein (545 aa).

Positions 1–329 are kae1; sequence MDTSKDLICI…YRSDMVEVNW (329 aa). Histidine 112, histidine 116, and tyrosine 133 together coordinate Fe cation. L-threonylcarbamoyladenylate-binding positions include 133–137, aspartate 165, glycine 178, glutamate 182, and asparagine 262; that span reads YVSGG. Aspartate 290 lines the Fe cation pocket. The region spanning 344–545 is the Protein kinase domain; sequence IIPEHLIGKG…KEVEKRARYL (202 aa). ATP contacts are provided by residues 350–358 and lysine 371; that span reads IGKGAEADI. Aspartate 463 functions as the Proton acceptor; for kinase activity in the catalytic mechanism.

It in the N-terminal section; belongs to the KAE1 / TsaD family. The protein in the C-terminal section; belongs to the protein kinase superfamily. Tyr protein kinase family. BUD32 subfamily. In terms of assembly, component of the KEOPS complex that consists of Kae1, Bud32, Cgi121 and Pcc1; the whole complex dimerizes. The cofactor is Fe(2+).

Its subcellular location is the cytoplasm. It carries out the reaction L-seryl-[protein] + ATP = O-phospho-L-seryl-[protein] + ADP + H(+). The enzyme catalyses L-threonyl-[protein] + ATP = O-phospho-L-threonyl-[protein] + ADP + H(+). It catalyses the reaction L-threonylcarbamoyladenylate + adenosine(37) in tRNA = N(6)-L-threonylcarbamoyladenosine(37) in tRNA + AMP + H(+). In terms of biological role, required for the formation of a threonylcarbamoyl group on adenosine at position 37 (t(6)A37) in tRNAs that read codons beginning with adenine. Is a component of the KEOPS complex that is probably involved in the transfer of the threonylcarbamoyl moiety of threonylcarbamoyl-AMP (TC-AMP) to the N6 group of A37. The Kae1 domain likely plays a direct catalytic role in this reaction. The Bud32 domain probably displays kinase activity that regulates Kae1 function. The polypeptide is Probable bifunctional tRNA threonylcarbamoyladenosine biosynthesis protein (Methanococcus maripaludis (strain C5 / ATCC BAA-1333)).